Consider the following 122-residue polypeptide: Large ribosomal subunit protein uL14c (122 aa).

This sequence belongs to the universal ribosomal protein uL14 family. Part of the 50S ribosomal subunit.

It is found in the plastid. The protein resides in the chloroplast. Its function is as follows. Binds to 23S rRNA. In Pleurastrum terricola (Filamentous green alga), this protein is Large ribosomal subunit protein uL14c.